A 575-amino-acid polypeptide reads, in one-letter code: DNA-directed RNA polymerase subunit beta' (575 aa).

Cysteine 64, cysteine 66, cysteine 85, and cysteine 88 together coordinate Zn(2+). Positions 440, 442, and 444 each coordinate Mg(2+).

It belongs to the RNA polymerase beta' chain family. RpoC1 subfamily. In plastids the minimal PEP RNA polymerase catalytic core is composed of four subunits: alpha, beta, beta', and beta''. When a (nuclear-encoded) sigma factor is associated with the core the holoenzyme is formed, which can initiate transcription. It depends on Mg(2+) as a cofactor. Requires Zn(2+) as cofactor.

Its subcellular location is the plastid. It catalyses the reaction RNA(n) + a ribonucleoside 5'-triphosphate = RNA(n+1) + diphosphate. Functionally, DNA-dependent RNA polymerase catalyzes the transcription of DNA into RNA using the four ribonucleoside triphosphates as substrates. This Euglena longa (Euglenophycean alga) protein is DNA-directed RNA polymerase subunit beta'.